We begin with the raw amino-acid sequence, 316 residues long: N-acetyl-gamma-glutamyl-phosphate reductase (316 aa).

Cysteine 136 is a catalytic residue.

Belongs to the NAGSA dehydrogenase family. Type 1 subfamily.

It is found in the cytoplasm. The catalysed reaction is N-acetyl-L-glutamate 5-semialdehyde + phosphate + NADP(+) = N-acetyl-L-glutamyl 5-phosphate + NADPH + H(+). It participates in amino-acid biosynthesis; L-arginine biosynthesis; N(2)-acetyl-L-ornithine from L-glutamate: step 3/4. Catalyzes the NADPH-dependent reduction of N-acetyl-5-glutamyl phosphate to yield N-acetyl-L-glutamate 5-semialdehyde. This is N-acetyl-gamma-glutamyl-phosphate reductase from Xanthomonas euvesicatoria pv. vesicatoria (strain 85-10) (Xanthomonas campestris pv. vesicatoria).